The chain runs to 149 residues: Macrodomain Ter protein (149 aa).

Belongs to the MatP family. In terms of assembly, homodimer.

The protein localises to the cytoplasm. Required for spatial organization of the terminus region of the chromosome (Ter macrodomain) during the cell cycle. Prevents early segregation of duplicated Ter macrodomains during cell division. Binds specifically to matS, which is a 13 bp signature motif repeated within the Ter macrodomain. In Vibrio vulnificus (strain CMCP6), this protein is Macrodomain Ter protein.